The primary structure comprises 266 residues: Thiazole synthase (266 aa).

Catalysis depends on K107, which acts as the Schiff-base intermediate with DXP. 1-deoxy-D-xylulose 5-phosphate-binding positions include G168, 194-195 (AG), and 216-217 (NT).

It belongs to the ThiG family. As to quaternary structure, homotetramer. Forms heterodimers with either ThiH or ThiS.

It is found in the cytoplasm. The enzyme catalyses [ThiS sulfur-carrier protein]-C-terminal-Gly-aminoethanethioate + 2-iminoacetate + 1-deoxy-D-xylulose 5-phosphate = [ThiS sulfur-carrier protein]-C-terminal Gly-Gly + 2-[(2R,5Z)-2-carboxy-4-methylthiazol-5(2H)-ylidene]ethyl phosphate + 2 H2O + H(+). The protein operates within cofactor biosynthesis; thiamine diphosphate biosynthesis. Catalyzes the rearrangement of 1-deoxy-D-xylulose 5-phosphate (DXP) to produce the thiazole phosphate moiety of thiamine. Sulfur is provided by the thiocarboxylate moiety of the carrier protein ThiS. In vitro, sulfur can be provided by H(2)S. This chain is Thiazole synthase, found in Azorhizobium caulinodans (strain ATCC 43989 / DSM 5975 / JCM 20966 / LMG 6465 / NBRC 14845 / NCIMB 13405 / ORS 571).